The chain runs to 214 residues: Membrane antigen containing repeating peptides (214 aa).

Repeat copies occupy residues 1–14, 15–28, 29–42, and 43–56. The segment at 1 to 31 is disordered; sequence QETSAKLADTEETLQETSAKLADTEETLQET. The tract at residues 1–56 is 4 X 14 AA tandem repeats; the sequence is QETSAKLADTEETLQETSAKLADTEETLQETSAKLADTEETLQETSAKLADTEETL. Residues 180 to 214 form a disordered region; that stretch reads CSLHPTPRRLGDVSNRENSIENKTRSASRLSGRLF. Residues 188 to 203 show a composition bias toward basic and acidic residues; it reads RLGDVSNRENSIENKT.

Its subcellular location is the membrane. The protein is Membrane antigen containing repeating peptides of Leishmania major.